A 525-amino-acid chain; its full sequence is GMP synthase [glutamine-hydrolyzing] (525 aa).

The Glutamine amidotransferase type-1 domain occupies 9 to 207 (RVLILDFGSQ…VLEIAGCEPL (199 aa)). Cys-86 acts as the Nucleophile in catalysis. Residues His-181 and Glu-183 contribute to the active site. One can recognise a GMPS ATP-PPase domain in the interval 208 to 400 (WTPANIVEDA…LGLPYDMVYR (193 aa)). 235–241 (SGGVDSS) serves as a coordination point for ATP.

As to quaternary structure, homodimer.

The enzyme catalyses XMP + L-glutamine + ATP + H2O = GMP + L-glutamate + AMP + diphosphate + 2 H(+). It participates in purine metabolism; GMP biosynthesis; GMP from XMP (L-Gln route): step 1/1. Its function is as follows. Catalyzes the synthesis of GMP from XMP. This is GMP synthase [glutamine-hydrolyzing] from Teredinibacter turnerae (strain ATCC 39867 / T7901).